Here is a 168-residue protein sequence, read N- to C-terminus: tRNA-splicing endonuclease (168 aa).

Active-site residues include tyrosine 107, histidine 114, and lysine 145.

Belongs to the tRNA-intron endonuclease family. Archaeal short subfamily. In terms of assembly, homotetramer; although the tetramer contains four active sites, only two participate in the cleavage. Therefore, it should be considered as a dimer of dimers.

The enzyme catalyses pretRNA = a 3'-half-tRNA molecule with a 5'-OH end + a 5'-half-tRNA molecule with a 2',3'-cyclic phosphate end + an intron with a 2',3'-cyclic phosphate and a 5'-hydroxyl terminus.. In terms of biological role, endonuclease that removes tRNA introns. Cleaves pre-tRNA at the 5'- and 3'-splice sites to release the intron. The products are an intron and two tRNA half-molecules bearing 2',3' cyclic phosphate and 5'-OH termini. Recognizes a pseudosymmetric substrate in which 2 bulged loops of 3 bases are separated by a stem of 4 bp. The polypeptide is tRNA-splicing endonuclease (Thermococcus gammatolerans (strain DSM 15229 / JCM 11827 / EJ3)).